The primary structure comprises 333 residues: Protein FAM170A (333 aa).

3 disordered regions span residues 1–45, 73–107, and 143–214; these read MKRR…GVGE, LQDS…PSYK, and ETSE…AKTP. Basic and acidic residues predominate over residues 10–29; the sequence is LEIEESKEAGISKSQEDISH. Low complexity predominate over residues 92 to 105; the sequence is TTAPSQQASSSCPS. Positions 143 to 156 are enriched in basic and acidic residues; the sequence is ETSESLEKQPRMEE. Residues 170–179 show a composition bias toward polar residues; that stretch reads SDVSTRNLLS. Residues 185–196 are compositionally biased toward basic and acidic residues; it reads GEEKEHEEKPES. T213 bears the Phosphothreonine mark. A C2H2-type; degenerate zinc finger spans residues 224–248; it reads FRCMACCRVFATMESLQEHVQYGIR. Residues 267-333 form a disordered region; the sequence is MESESTQEEE…RKDHCDNSGS (67 aa). The span at 271 to 281 shows a compositional bias: acidic residues; that stretch reads STQEEEEDHTE. Positions 282 to 293 are enriched in basic and acidic residues; it reads ETEKPKEEKAEE. S308 is subject to Phosphoserine.

This sequence belongs to the FAM170 family. Testis-specific.

The protein resides in the nucleus. Acts as a nuclear transcription factor that positively regulates the expression of heat shock genes. Binds to heat shock promoter elements (HSE). In Mus musculus (Mouse), this protein is Protein FAM170A (Fam170a).